A 424-amino-acid chain; its full sequence is Histidine--tRNA ligase (424 aa).

It belongs to the class-II aminoacyl-tRNA synthetase family. As to quaternary structure, homodimer.

It is found in the cytoplasm. It carries out the reaction tRNA(His) + L-histidine + ATP = L-histidyl-tRNA(His) + AMP + diphosphate + H(+). The polypeptide is Histidine--tRNA ligase (Shewanella woodyi (strain ATCC 51908 / MS32)).